We begin with the raw amino-acid sequence, 237 residues long: Type III pantothenate kinase (237 aa).

6 to 13 (DAGNSRVK) is a binding site for ATP. Residues tyrosine 86 and 93 to 96 (GADR) each bind substrate. Residue aspartate 95 is the Proton acceptor of the active site. Threonine 118 contacts ATP. Residue threonine 168 coordinates substrate.

The protein belongs to the type III pantothenate kinase family. In terms of assembly, homodimer. NH4(+) is required as a cofactor. The cofactor is K(+).

Its subcellular location is the cytoplasm. It carries out the reaction (R)-pantothenate + ATP = (R)-4'-phosphopantothenate + ADP + H(+). The protein operates within cofactor biosynthesis; coenzyme A biosynthesis; CoA from (R)-pantothenate: step 1/5. In terms of biological role, catalyzes the phosphorylation of pantothenate (Pan), the first step in CoA biosynthesis. In Chromobacterium violaceum (strain ATCC 12472 / DSM 30191 / JCM 1249 / CCUG 213 / NBRC 12614 / NCIMB 9131 / NCTC 9757 / MK), this protein is Type III pantothenate kinase.